Here is a 640-residue protein sequence, read N- to C-terminus: Threonine--tRNA ligase (640 aa).

The region spanning 1-61 (MPIITLPDGN…EKDSEVNIIT (61 aa)) is the TGS domain. Positions 242–533 (DHRRIAKQMS…LIEHYAGRMP (292 aa)) are catalytic. The Zn(2+) site is built by Cys333, His384, and His510.

This sequence belongs to the class-II aminoacyl-tRNA synthetase family. Homodimer. The cofactor is Zn(2+).

It is found in the cytoplasm. It carries out the reaction tRNA(Thr) + L-threonine + ATP = L-threonyl-tRNA(Thr) + AMP + diphosphate + H(+). In terms of biological role, catalyzes the attachment of threonine to tRNA(Thr) in a two-step reaction: L-threonine is first activated by ATP to form Thr-AMP and then transferred to the acceptor end of tRNA(Thr). Also edits incorrectly charged L-seryl-tRNA(Thr). This Prochlorococcus marinus (strain MIT 9303) protein is Threonine--tRNA ligase.